We begin with the raw amino-acid sequence, 363 residues long: Histidinol-phosphate aminotransferase (363 aa).

Lys-227 carries the N6-(pyridoxal phosphate)lysine modification.

This sequence belongs to the class-II pyridoxal-phosphate-dependent aminotransferase family. Histidinol-phosphate aminotransferase subfamily. Homodimer. Requires pyridoxal 5'-phosphate as cofactor.

It catalyses the reaction L-histidinol phosphate + 2-oxoglutarate = 3-(imidazol-4-yl)-2-oxopropyl phosphate + L-glutamate. Its pathway is amino-acid biosynthesis; L-histidine biosynthesis; L-histidine from 5-phospho-alpha-D-ribose 1-diphosphate: step 7/9. The polypeptide is Histidinol-phosphate aminotransferase (Akkermansia muciniphila (strain ATCC BAA-835 / DSM 22959 / JCM 33894 / BCRC 81048 / CCUG 64013 / CIP 107961 / Muc)).